The primary structure comprises 156 residues: ATP synthase subunit b (156 aa).

Residues 5–25 form a helical membrane-spanning segment; the sequence is LTLIGQAIAFAFFVAFCMKFV.

Belongs to the ATPase B chain family. F-type ATPases have 2 components, F(1) - the catalytic core - and F(0) - the membrane proton channel. F(1) has five subunits: alpha(3), beta(3), gamma(1), delta(1), epsilon(1). F(0) has three main subunits: a(1), b(2) and c(10-14). The alpha and beta chains form an alternating ring which encloses part of the gamma chain. F(1) is attached to F(0) by a central stalk formed by the gamma and epsilon chains, while a peripheral stalk is formed by the delta and b chains.

Its subcellular location is the cell inner membrane. F(1)F(0) ATP synthase produces ATP from ADP in the presence of a proton or sodium gradient. F-type ATPases consist of two structural domains, F(1) containing the extramembraneous catalytic core and F(0) containing the membrane proton channel, linked together by a central stalk and a peripheral stalk. During catalysis, ATP synthesis in the catalytic domain of F(1) is coupled via a rotary mechanism of the central stalk subunits to proton translocation. Its function is as follows. Component of the F(0) channel, it forms part of the peripheral stalk, linking F(1) to F(0). The sequence is that of ATP synthase subunit b from Acinetobacter baumannii (strain AYE).